A 79-amino-acid polypeptide reads, in one-letter code: Conotoxin Vi6.1 (79 aa).

An N-terminal signal peptide occupies residues 1-22; it reads MKLTCVLIITVLFLTASQLITA. Positions 23-47 are excised as a propeptide; it reads DYSRDQRQYRAVRLGDEMRNFKGAR. Intrachain disulfides connect cysteine 49-cysteine 62, cysteine 56-cysteine 67, and cysteine 61-cysteine 77. Proline 60 and proline 63 each carry 4-hydroxyproline.

In terms of tissue distribution, expressed by the venom duct.

It is found in the secreted. Functionally, ion channel inhibitor that inhibits the increase in intracellular calcium upon depolarization in DRG neurons. In vivo, both intraperitoneal and intracranial injections into mice induce hyperactivity. The polypeptide is Conotoxin Vi6.1 (Conus virgo (Virgin cone)).